Reading from the N-terminus, the 1120-residue chain is TBC1 domain family member 8B (1120 aa).

GRAM domains lie at 145-212 (LKFE…EKTS) and 285-353 (EQFN…DKTN). The region spanning 487 to 674 (GIPETLRGEL…NVVDCFFYDG (188 aa)) is the Rab-GAP TBC domain. The 36-residue stretch at 858-893 (NKDSLALWTFRLLDENSDCLINFKEFSSAIDIMYNG) folds into the EF-hand domain. Residues 1035–1066 (SPTSSAKGFSGTVCGSGGPSEEKTGSHLEKDP) are disordered. The segment covering 1054–1066 (SEEKTGSHLEKDP) has biased composition (basic and acidic residues).

Interacts (via domain Rab-GAP TBC) with RAB11B (in GTP-bound form). As to expression, kidney (at protein level).

The protein resides in the cytoplasm. It is found in the cytosol. Functionally, involved in vesicular recycling, probably as a RAB11B GTPase-activating protein. This is TBC1 domain family member 8B (TBC1D8B) from Homo sapiens (Human).